A 364-amino-acid polypeptide reads, in one-letter code: MKTIGGKVFRHAAILAACVLPLWCQPALAERIKDLASIQGVRSNQLIGYGIVVGLDNTGDQTTQTPFTTQAMSNMLSQLGVNLTQEQSQKLQLKNVAAAMVTANLPSFSRPGQPIDVTVSSMGNAKSLRGGTLLMTQLKGADGQVYAIAQGNVLVGGVGASSGGSKVTVNHLSAGRIPGGATVERAVPTAVGQGGVVYYELANSDFGTVQKVVDAINRTAGAGTAQAVDGRRMVVKVPEDADSRVSFLGRIENLDVQPVAGVAKVVINPRTGSVVMNQKVTLDACAVAHGSLSVVVDAGQPQFGQAADIQVKQDNGSLMNVKAGANLADVVKALNALGANPLDLLAILQAMKAAGALRADLEVI.

A signal peptide spans 1 to 29 (MKTIGGKVFRHAAILAACVLPLWCQPALA).

The protein belongs to the FlgI family. The basal body constitutes a major portion of the flagellar organelle and consists of four rings (L,P,S, and M) mounted on a central rod.

Its subcellular location is the periplasm. The protein localises to the bacterial flagellum basal body. Assembles around the rod to form the L-ring and probably protects the motor/basal body from shearing forces during rotation. This chain is Flagellar P-ring protein, found in Dechloromonas aromatica (strain RCB).